We begin with the raw amino-acid sequence, 661 residues long: CD180 antigen (661 aa).

The N-terminal stretch at Met-1 to Ser-23 is a signal peptide. Topologically, residues Trp-24 to Gly-626 are extracellular. The 21-residue stretch at Ala-33 to Asn-53 folds into the LRRNT domain. 4 N-linked (GlcNAc...) asparagine glycosylation sites follow: Asn-34, Asn-53, Asn-70, and Asn-78. LRR repeat units follow at residues Thr-54 to Arg-75, Asn-78 to Ser-99, Gln-102 to Gly-123, Ser-126 to Asn-147, Asn-150 to Pro-171, Asn-174 to Ser-195, and Asn-201 to Ser-221. N-linked (GlcNAc...) asparagine glycosylation is found at Asn-201, Asn-234, and Asn-244. LRR repeat units follow at residues Ser-275–Cys-296, Gln-299–Leu-320, Leu-322–Asn-343, Ser-346–Leu-366, and Asn-371–Gln-391. N-linked (GlcNAc...) asparagine glycosylation is found at Asn-394 and Asn-402. LRR repeat units lie at residues His-397–Glu-418, Gln-421–Gln-442, Phe-446–Ala-466, Val-470–Gln-493, Ser-497–Ser-518, Lys-521–Lys-544, and Ile-546–Pro-564. A glycan (N-linked (GlcNAc...) asparagine) is linked at Asn-451. N-linked (GlcNAc...) asparagine glycosylation is present at Asn-573. An LRRCT domain is found at Asn-577–Ile-627. The helical transmembrane segment at Ile-627 to Val-650 threads the bilayer. Over Lys-651–Ile-661 the chain is Cytoplasmic.

It belongs to the Toll-like receptor family. In terms of assembly, M-shaped tetramer of two CD180-LY86 heterodimers. In terms of tissue distribution, expressed mainly on mature peripherical B cells. Detected in spleen, lymph node and appendix. Not detected in pre-B and -T cells.

The protein localises to the cell membrane. In terms of biological role, may cooperate with MD-1 and TLR4 to mediate the innate immune response to bacterial lipopolysaccharide (LPS) in B-cells. Leads to NF-kappa-B activation. Also involved in the life/death decision of B-cells. The sequence is that of CD180 antigen (CD180) from Homo sapiens (Human).